The following is a 394-amino-acid chain: MQLLDTLEQGLKEIDARGLRRRRRTVDSPCSAHMTVDGRNMIGFASNDYLGLAAHPLLVAAITEGARRYGAGSGGSHLLGGHSRAHAQLEDDLAEFAGGFVDNPRALYFSTGYMANLATLTALAGRGTTLFSDSLNHASLIDGARLSRADIQIYPHADAEALGAMLEASDAAVKLIVSDTVFSMDGDIAPLARLLELAEHHGAWLVVDDAHGFGVLGPQGRGAVAEAALRSPHLIVVGTLGKAAGVSGAFVVAHETVIEWLVQRARPYIFTTASVPSAAHAVSASLRIIGGDEGEHRRAHLRSLIALTRDMLKSTPWLPVDSHTAVQPLIIGSNEATLDVAASLDRANLWVPAIRPPTVPEGTSRLRISLSAAHSHNDLEQLEHALMKTAEARA.

Residue Arg21 participates in substrate binding. 112–113 (GY) serves as a coordination point for pyridoxal 5'-phosphate. His137 serves as a coordination point for substrate. Residues Ser183, His211, and Thr239 each contribute to the pyridoxal 5'-phosphate site. An N6-(pyridoxal phosphate)lysine modification is found at Lys242. Thr358 is a substrate binding site.

The protein belongs to the class-II pyridoxal-phosphate-dependent aminotransferase family. BioF subfamily. Homodimer. Requires pyridoxal 5'-phosphate as cofactor.

It carries out the reaction 6-carboxyhexanoyl-[ACP] + L-alanine + H(+) = (8S)-8-amino-7-oxononanoate + holo-[ACP] + CO2. The protein operates within cofactor biosynthesis; biotin biosynthesis. In terms of biological role, catalyzes the decarboxylative condensation of pimeloyl-[acyl-carrier protein] and L-alanine to produce 8-amino-7-oxononanoate (AON), [acyl-carrier protein], and carbon dioxide. The chain is 8-amino-7-oxononanoate synthase from Paraburkholderia phymatum (strain DSM 17167 / CIP 108236 / LMG 21445 / STM815) (Burkholderia phymatum).